Consider the following 119-residue polypeptide: Protein TusC (119 aa).

This sequence belongs to the DsrF/TusC family. Heterohexamer, formed by a dimer of trimers. The hexameric TusBCD complex contains 2 copies each of TusB, TusC and TusD. The TusBCD complex interacts with TusE.

It localises to the cytoplasm. Its function is as follows. Part of a sulfur-relay system required for 2-thiolation of 5-methylaminomethyl-2-thiouridine (mnm(5)s(2)U) at tRNA wobble positions. This is Protein TusC from Photorhabdus laumondii subsp. laumondii (strain DSM 15139 / CIP 105565 / TT01) (Photorhabdus luminescens subsp. laumondii).